The following is a 57-amino-acid chain: COP9 signalosome complex subunit 9 (57 aa).

This sequence belongs to the CSN9 family. As to quaternary structure, component of the CSN complex, probably composed of cops1, cops2, cops3, cops4, cops5, cops6, cops7, cops8 and cops9.

It localises to the nucleus. It is found in the cytoplasm. The protein resides in the nucleoplasm. Its function is as follows. Component of the COP9 signalosome complex (CSN), a complex involved in various cellular and developmental processes. The CSN complex is an essential regulator of the ubiquitin (Ubl) conjugation pathway by mediating the deneddylation of the cullin subunits of SCF-type E3 ligase complexes, leading to decrease the Ubl ligase activity. May play a role in cell proliferation. In Danio rerio (Zebrafish), this protein is COP9 signalosome complex subunit 9.